The following is a 207-amino-acid chain: Large ribosomal subunit protein uL4 (207 aa).

Residues 43–80 (RRRSGTAKSKGRSEVSGSTRKLYRQKGTGNARSGSVKS) are disordered. The segment covering 69-78 (GTGNARSGSV) has biased composition (polar residues).

This sequence belongs to the universal ribosomal protein uL4 family. As to quaternary structure, part of the 50S ribosomal subunit.

One of the primary rRNA binding proteins, this protein initially binds near the 5'-end of the 23S rRNA. It is important during the early stages of 50S assembly. It makes multiple contacts with different domains of the 23S rRNA in the assembled 50S subunit and ribosome. Functionally, forms part of the polypeptide exit tunnel. The polypeptide is Large ribosomal subunit protein uL4 (Desulforapulum autotrophicum (strain ATCC 43914 / DSM 3382 / VKM B-1955 / HRM2) (Desulfobacterium autotrophicum)).